Reading from the N-terminus, the 2637-residue chain is Nonribisomal peptide synthetase valB (2637 aa).

Residues 1–376 form a condensation 1 region; the sequence is MADGADYTQR…KALIRSPPST (376 aa). The segment at 413–803 is adenylation 1; the sequence is SQASRRPDAA…VGRRDNQIKL (391 aa). The Carrier 1 domain maps to 946–1022; the sequence is PPANPPERAL…EAASEIKEPT (77 aa). Serine 983 carries the O-(pantetheine 4'-phosphoryl)serine modification. The segment at 1016-1045 is disordered; the sequence is SEIKEPTDASAPSPSPISRDLPLQKSNHDR. The condensation 2 stretch occupies residues 1063-1506; that stretch reads VEAIYPCTAL…LSRADMSLLQ (444 aa). Residues 1524-1933 are adenylation 2; the sequence is AREVAHQRPL…EGRKDTRVKL (410 aa). The 77-residue stretch at 2078–2154 folds into the Carrier 2 domain; that stretch reads KEVTDDQAFM…YMVSKTSVSN (77 aa). Serine 2115 is modified (O-(pantetheine 4'-phosphoryl)serine). The interval 2193 to 2582 is condensation 3; the sequence is ESVAPATDAQ…LWMGAYLDAA (390 aa).

The protein belongs to the NRP synthetase family.

The protein operates within secondary metabolite biosynthesis. Nonribisomal peptide synthetase; part of the gene cluster that mediates the biosynthesis of valactamides. The first step of the pathway is performed by the highly reducing polyketide synthase valA that produces the polyketide part of the final products. An acetyl starter unit is incorporated by the ketosynthase domain of valA, and subsequently 6 malonyl-CoA-derived ketide units are incorporated and fully reduced to their respective alkane forms by the action of the ketoreductase, dehydratase, and enoylreductase domains (except for the penultimate unit, which is reduced only to the alkene). The final five ketide units are each proposed to be alpha-methylated by the methyltransferase domain before ketone reduction by the ketoreductase domain. The C1 domain of the nonribisomal peptide synthetase valB then catalyzes amide bond formation between the heptaketide chain and L-valine (L-Val) attached to the T1 domain. The C2 domain incorporating L-isoleucine (L-Ile) then carries out chain elongation, which is followed by macrolactonization by the Ct domain to release the final product. The polypeptide is Nonribisomal peptide synthetase valB (Aspergillus terreus).